Reading from the N-terminus, the 430-residue chain is Probable glucose-6-phosphate isomerase (430 aa).

E271 (proton donor) is an active-site residue. Residues H292, H303, and K403 contribute to the active site.

This sequence belongs to the GPI family.

Its subcellular location is the cytoplasm. It catalyses the reaction alpha-D-glucose 6-phosphate = beta-D-fructose 6-phosphate. It functions in the pathway carbohydrate biosynthesis; gluconeogenesis. Its pathway is carbohydrate degradation; glycolysis; D-glyceraldehyde 3-phosphate and glycerone phosphate from D-glucose: step 2/4. Catalyzes the reversible isomerization of glucose-6-phosphate to fructose-6-phosphate. The sequence is that of Probable glucose-6-phosphate isomerase from Haloquadratum walsbyi (strain DSM 16790 / HBSQ001).